We begin with the raw amino-acid sequence, 229 residues long: Cytidylate kinase (229 aa).

ATP is bound at residue glycine 12–serine 20.

It belongs to the cytidylate kinase family. Type 1 subfamily.

It is found in the cytoplasm. The enzyme catalyses CMP + ATP = CDP + ADP. It catalyses the reaction dCMP + ATP = dCDP + ADP. In Rhodococcus opacus (strain B4), this protein is Cytidylate kinase.